We begin with the raw amino-acid sequence, 267 residues long: Putative transcription factor Ovo-like 1 (267 aa).

4 consecutive C2H2-type zinc fingers follow at residues 118–140 (FTCH…MKCH), 146–168 (HLCT…VRTH), 174–197 (YKCS…KKIH), and 213–235 (YVCE…LKEH).

It localises to the nucleus. In terms of biological role, putative transcription factor. Involved in hair formation and spermatogenesis. May function in the differentiation and/or maintenance of the urogenital system. This chain is Putative transcription factor Ovo-like 1 (OVOL1), found in Bos taurus (Bovine).